Consider the following 360-residue polypeptide: Phenylalanine--tRNA ligase alpha subunit (360 aa).

Position 260 (Glu260) interacts with Mg(2+).

This sequence belongs to the class-II aminoacyl-tRNA synthetase family. Phe-tRNA synthetase alpha subunit type 1 subfamily. In terms of assembly, tetramer of two alpha and two beta subunits. It depends on Mg(2+) as a cofactor.

The protein localises to the cytoplasm. The enzyme catalyses tRNA(Phe) + L-phenylalanine + ATP = L-phenylalanyl-tRNA(Phe) + AMP + diphosphate + H(+). The protein is Phenylalanine--tRNA ligase alpha subunit of Cereibacter sphaeroides (strain ATCC 17029 / ATH 2.4.9) (Rhodobacter sphaeroides).